The following is a 173-amino-acid chain: Photosystem I assembly protein Ycf3 (173 aa).

TPR repeat units follow at residues 35 to 68, 72 to 105, and 120 to 153; these read AYIY…EENK, GETL…NPKQ, and GRFA…YPGG.

This sequence belongs to the Ycf3 family.

It localises to the cellular thylakoid membrane. Essential for the assembly of the photosystem I (PSI) complex. May act as a chaperone-like factor to guide the assembly of the PSI subunits. This Prochlorococcus marinus subsp. pastoris (strain CCMP1986 / NIES-2087 / MED4) protein is Photosystem I assembly protein Ycf3.